A 254-amino-acid chain; its full sequence is Ribosomal RNA small subunit methyltransferase A (254 aa).

Residues Asn-12, Leu-14, Gly-38, Glu-59, Asp-83, and Asn-100 each coordinate S-adenosyl-L-methionine.

Belongs to the class I-like SAM-binding methyltransferase superfamily. rRNA adenine N(6)-methyltransferase family. RsmA subfamily.

The protein resides in the cytoplasm. The enzyme catalyses adenosine(1518)/adenosine(1519) in 16S rRNA + 4 S-adenosyl-L-methionine = N(6)-dimethyladenosine(1518)/N(6)-dimethyladenosine(1519) in 16S rRNA + 4 S-adenosyl-L-homocysteine + 4 H(+). Specifically dimethylates two adjacent adenosines (A1518 and A1519) in the loop of a conserved hairpin near the 3'-end of 16S rRNA in the 30S particle. May play a critical role in biogenesis of 30S subunits. The chain is Ribosomal RNA small subunit methyltransferase A from Mycoplasma mobile (strain ATCC 43663 / 163K / NCTC 11711) (Mesomycoplasma mobile).